The sequence spans 414 residues: Enterobactin exporter EntS (414 aa).

At methionine 1–alanine 21 the chain is on the cytoplasmic side. Residues valine 22–valine 42 traverse the membrane as a helical segment. Topologically, residues glutamine 43–glycine 55 are periplasmic. Residues leucine 56–alanine 76 form a helical membrane-spanning segment. The Cytoplasmic segment spans residues aspartate 77–lysine 83. Residues valine 84 to leucine 104 traverse the membrane as a helical segment. Topologically, residues leucine 105–serine 109 are periplasmic. The helical transmembrane segment at leucine 110–alanine 130 threads the bilayer. Topologically, residues leucine 131 to arginine 156 are cytoplasmic. Residues leucine 157–tryptophan 177 form a helical membrane-spanning segment. Residue asparagine 178 is a topological domain, periplasmic. A helical membrane pass occupies residues tyrosine 179–leucine 199. Residues proline 200–arginine 218 are Cytoplasmic-facing. The chain crosses the membrane as a helical span at residues phenylalanine 219–alanine 239. Over serine 240 to serine 256 the chain is Periplasmic. The chain crosses the membrane as a helical span at residues alanine 257–threonine 277. The Cytoplasmic segment spans residues serine 278–proline 287. A helical membrane pass occupies residues glycine 288–isoleucine 307. At methionine 308–alanine 313 the chain is on the periplasmic side. The chain crosses the membrane as a helical span at residues glycine 314–leucine 336. Residues glutamine 337–asparagine 356 lie on the Cytoplasmic side of the membrane. Residues valine 357–valine 377 form a helical membrane-spanning segment. Residue alanine 378 is a topological domain, periplasmic. The helical transmembrane segment at serine 379 to glycine 399 threads the bilayer. At glutamate 400–glycine 414 the chain is on the cytoplasmic side.

Belongs to the major facilitator superfamily. EntS (TC 2.A.1.38) family.

It is found in the cell inner membrane. In terms of biological role, component of an export pathway for enterobactin. The protein is Enterobactin exporter EntS of Salmonella choleraesuis (strain SC-B67).